We begin with the raw amino-acid sequence, 732 residues long: Subtilisin-like protease SBT4.13 (732 aa).

The N-terminal stretch at 1–24 (MATLAASSSLLSCLLVLFLSSVSA) is a signal peptide. Positions 25 to 109 (VTDDKQVYIV…VFPNKKLQLQ (85 aa)) are cleaved as a propeptide — activation peptide. The Inhibitor I9 domain maps to 31–108 (VYIVYMGSLS…SVFPNKKLQL (78 aa)). The region spanning 113–579 (SWDFMGLKEG…SGHVDPIAAS (467 aa)) is the Peptidase S8 domain. Asp-141 serves as the catalytic Charge relay system. Asn-172 is a glycosylation site (N-linked (GlcNAc...) asparagine). The active-site Charge relay system is His-196. An N-linked (GlcNAc...) asparagine glycan is attached at Asn-219. In terms of domain architecture, PA spans 352–436 (DYPLVYGKSA…GLLTEDFESL (85 aa)). N-linked (GlcNAc...) asparagine glycosylation occurs at Asn-458. Ser-518 acts as the Charge relay system in catalysis. Asn-555, Asn-600, Asn-648, and Asn-658 each carry an N-linked (GlcNAc...) asparagine glycan.

This sequence belongs to the peptidase S8 family. Post-translationally, the C-terminal propeptide is autocleaved.

Its subcellular location is the secreted. This Arabidopsis thaliana (Mouse-ear cress) protein is Subtilisin-like protease SBT4.13.